Here is a 405-residue protein sequence, read N- to C-terminus: Adenylosuccinate synthetase (405 aa).

GTP contacts are provided by residues 12–18 and 40–42; these read GDEGKGK and GHT. The Proton acceptor role is filled by D13. Mg(2+) contacts are provided by D13 and G40. Residues 13-16, 38-41, T121, R135, Q213, T228, and R297 each bind IMP; these read DEGK and NAGH. H41 acts as the Proton donor in catalysis. 293–299 serves as a coordination point for substrate; that stretch reads TTTGRAR. GTP contacts are provided by residues R299, 325–327, and 390–392; these read KMD and SAG.

This sequence belongs to the adenylosuccinate synthetase family. Homodimer. Mg(2+) is required as a cofactor.

It localises to the cytoplasm. It carries out the reaction IMP + L-aspartate + GTP = N(6)-(1,2-dicarboxyethyl)-AMP + GDP + phosphate + 2 H(+). It functions in the pathway purine metabolism; AMP biosynthesis via de novo pathway; AMP from IMP: step 1/2. Plays an important role in the de novo pathway of purine nucleotide biosynthesis. Catalyzes the first committed step in the biosynthesis of AMP from IMP. This is Adenylosuccinate synthetase from Deinococcus deserti (strain DSM 17065 / CIP 109153 / LMG 22923 / VCD115).